Consider the following 347-residue polypeptide: FK506-binding protein-like (347 aa).

The tract at residues 1–36 (METSLISPMKENNTAQPQQREENTQQNLNAAVPIKQ) is disordered. Thr3 bears the Phosphothreonine mark. TPR repeat units lie at residues 208 to 241 (AKEE…LLTL), 250 to 283 (TILH…EPGH), and 284 to 317 (LKAL…DPKN).

In terms of assembly, forms a ternary complex with CDKN1A/p21 and HSP90AB1/Hsp90.

Its function is as follows. May be involved in response to X-ray. Regulates p21 protein stability by binding to Hsp90 and p21. This is FK506-binding protein-like (Fkbpl) from Rattus norvegicus (Rat).